The chain runs to 585 residues: Arginine--tRNA ligase (585 aa).

Positions 126 to 136 (PNIAKEMHVGH) match the 'HIGH' region motif.

It belongs to the class-I aminoacyl-tRNA synthetase family. As to quaternary structure, monomer.

The protein localises to the cytoplasm. It catalyses the reaction tRNA(Arg) + L-arginine + ATP = L-arginyl-tRNA(Arg) + AMP + diphosphate. This is Arginine--tRNA ligase from Cyanothece sp. (strain PCC 7425 / ATCC 29141).